Reading from the N-terminus, the 202-residue chain is MSRYTGPSWKISRRLGMSLSGTGKELARRPYAPGDHGQGRRGKLSEYGTQLREKQKLRMMYGLTERQFANLFIKAGKIREGKHGVNFMILLERRLDNMVYRLGLATTRRQARQLVNHGHITVDGKRVDIPSYEVSVGQVVSVREKSKKLAVITGAVEAVVARPNFVQFDADKLEGSLTRLPEREELEADIDESLIVEYYNKL.

Residues 22–48 (TGKELARRPYAPGDHGQGRRGKLSEYG) form a disordered region. One can recognise an S4 RNA-binding domain in the interval 93 to 154 (RRLDNMVYRL…KSKKLAVITG (62 aa)).

Belongs to the universal ribosomal protein uS4 family. As to quaternary structure, part of the 30S ribosomal subunit. Contacts protein S5. The interaction surface between S4 and S5 is involved in control of translational fidelity.

Its function is as follows. One of the primary rRNA binding proteins, it binds directly to 16S rRNA where it nucleates assembly of the body of the 30S subunit. In terms of biological role, with S5 and S12 plays an important role in translational accuracy. This chain is Small ribosomal subunit protein uS4, found in Lactiplantibacillus plantarum (strain ATCC BAA-793 / NCIMB 8826 / WCFS1) (Lactobacillus plantarum).